The following is a 237-amino-acid chain: Ribonuclease 3 (237 aa).

The region spanning 5–136 (VDELSARLGV…VIAALFLDQG (132 aa)) is the RNase III domain. A Mg(2+)-binding site is contributed by glutamate 49. Aspartate 53 is a catalytic residue. Mg(2+) contacts are provided by aspartate 122 and glutamate 125. Residue glutamate 125 is part of the active site. A DRBM domain is found at 163–232 (DYKSRLQARI…ARAALDALEG (70 aa)). The segment covering 185 to 208 (IDRSGPEHRPEFTVEVRAGEERLG) has biased composition (basic and acidic residues). The tract at residues 185–237 (IDRSGPEHRPEFTVEVRAGEERLGTGKGPSKQAAEQAAARAALDALEGGTDGR) is disordered. The segment covering 216–231 (QAAEQAAARAALDALE) has biased composition (low complexity).

Belongs to the ribonuclease III family. Homodimer. Mg(2+) is required as a cofactor.

The protein resides in the cytoplasm. The enzyme catalyses Endonucleolytic cleavage to 5'-phosphomonoester.. Functionally, digests double-stranded RNA. Involved in the processing of primary rRNA transcript to yield the immediate precursors to the large and small rRNAs (23S and 16S). Processes some mRNAs, and tRNAs when they are encoded in the rRNA operon. Processes pre-crRNA and tracrRNA of type II CRISPR loci if present in the organism. The polypeptide is Ribonuclease 3 (Roseiflexus sp. (strain RS-1)).